Reading from the N-terminus, the 97-residue chain is Aspartyl/glutamyl-tRNA(Asn/Gln) amidotransferase subunit C (97 aa).

Belongs to the GatC family. Heterotrimer of A, B and C subunits.

The enzyme catalyses L-glutamyl-tRNA(Gln) + L-glutamine + ATP + H2O = L-glutaminyl-tRNA(Gln) + L-glutamate + ADP + phosphate + H(+). The catalysed reaction is L-aspartyl-tRNA(Asn) + L-glutamine + ATP + H2O = L-asparaginyl-tRNA(Asn) + L-glutamate + ADP + phosphate + 2 H(+). Allows the formation of correctly charged Asn-tRNA(Asn) or Gln-tRNA(Gln) through the transamidation of misacylated Asp-tRNA(Asn) or Glu-tRNA(Gln) in organisms which lack either or both of asparaginyl-tRNA or glutaminyl-tRNA synthetases. The reaction takes place in the presence of glutamine and ATP through an activated phospho-Asp-tRNA(Asn) or phospho-Glu-tRNA(Gln). This chain is Aspartyl/glutamyl-tRNA(Asn/Gln) amidotransferase subunit C, found in Thermosynechococcus vestitus (strain NIES-2133 / IAM M-273 / BP-1).